A 547-amino-acid chain; its full sequence is Glucose-6-phosphate isomerase (547 aa).

The active-site Proton donor is glutamate 353. Active-site residues include histidine 384 and lysine 512.

This sequence belongs to the GPI family.

It localises to the cytoplasm. It catalyses the reaction alpha-D-glucose 6-phosphate = beta-D-fructose 6-phosphate. It functions in the pathway carbohydrate biosynthesis; gluconeogenesis. Its pathway is carbohydrate degradation; glycolysis; D-glyceraldehyde 3-phosphate and glycerone phosphate from D-glucose: step 2/4. In terms of biological role, catalyzes the reversible isomerization of glucose-6-phosphate to fructose-6-phosphate. The protein is Glucose-6-phosphate isomerase of Pseudoalteromonas atlantica (strain T6c / ATCC BAA-1087).